The primary structure comprises 512 residues: Histidine ammonia-lyase (512 aa).

Residues 143–145 (CSG) constitute a cross-link (5-imidazolinone (Cys-Gly)). At serine 144 the chain carries 2,3-didehydroalanine (Ser).

Belongs to the PAL/histidase family. Post-translationally, contains an active site 4-methylidene-imidazol-5-one (MIO), which is formed autocatalytically by cyclization and dehydration of residues Cys-Ser-Gly.

It is found in the cytoplasm. It catalyses the reaction L-histidine = trans-urocanate + NH4(+). It functions in the pathway amino-acid degradation; L-histidine degradation into L-glutamate; N-formimidoyl-L-glutamate from L-histidine: step 1/3. This Streptomyces avermitilis (strain ATCC 31267 / DSM 46492 / JCM 5070 / NBRC 14893 / NCIMB 12804 / NRRL 8165 / MA-4680) protein is Histidine ammonia-lyase.